We begin with the raw amino-acid sequence, 525 residues long: D-arabinono-1,4-lactone oxidase (525 aa).

Residues 20–195 (IYSSRPEWYF…VGATVRVVPA (176 aa)) form the FAD-binding PCMH-type domain. Pros-8alpha-FAD histidine is present on His-58.

This sequence belongs to the oxygen-dependent FAD-linked oxidoreductase family. The cofactor is FAD.

The protein localises to the mitochondrion membrane. The catalysed reaction is D-arabinono-1,4-lactone + O2 = dehydro-D-arabinono-1,4-lactone + H2O2 + H(+). It participates in cofactor biosynthesis; D-erythroascorbate biosynthesis; dehydro-D-arabinono-1,4-lactone from D-arabinose: step 2/2. This Candida glabrata (strain ATCC 2001 / BCRC 20586 / JCM 3761 / NBRC 0622 / NRRL Y-65 / CBS 138) (Yeast) protein is D-arabinono-1,4-lactone oxidase (ALO1).